A 350-amino-acid chain; its full sequence is Lipase chaperone (350 aa).

A helical membrane pass occupies residues 12–32; sequence IVLYLILGCVVVCGVWYSFDV.

This sequence belongs to the lipase chaperone family.

The protein localises to the cell inner membrane. Functionally, may be involved in the folding of the extracellular lipase during its passage through the periplasm. The sequence is that of Lipase chaperone (lifO) from Xylella fastidiosa (strain 9a5c).